The sequence spans 425 residues: Orexin/Hypocretin receptor type 1 (425 aa).

The disordered stretch occupies residues 1–25; that stretch reads MEPSATPGPQMGVPTEGRERSPEPP. Over 1 to 46 the chain is Extracellular; the sequence is MEPSATPGPQMGVPTEGRERSPEPPDYEDEFLRYLWRDYLYPKQYE. The required for response to orexin-A stretch occupies residues 26–41; that stretch reads DYEDEFLRYLWRDYLY. A helical transmembrane segment spans residues 47 to 67; it reads WVLIAAYVAVFFVALVGNTLV. At 68-82 the chain is on the cytoplasmic side; sequence CLAVWRNHHMRTVTN. The chain crosses the membrane as a helical span at residues 83–105; the sequence is YFIVNLSLADVLVTAICLPASLL. Topologically, residues 106–119 are extracellular; that stretch reads VDITESWLFGHALC. An intrachain disulfide couples cysteine 119 to cysteine 202. Residues 120 to 140 traverse the membrane as a helical segment; it reads KVIPYLQAVSVSVAVLTLSFI. Over 141–160 the chain is Cytoplasmic; the sequence is ALDRWYAICHPLLFKSTARR. A helical membrane pass occupies residues 161–182; the sequence is ARGSILGIWAVSLAVMVPQAAV. Topologically, residues 183-213 are extracellular; sequence MECSSVLPELANRTRLFSVCDERWADDLYPK. Asparagine 194 carries N-linked (GlcNAc...) asparagine glycosylation. Residues 214-235 traverse the membrane as a helical segment; it reads IYHSCFFIVTYLAPLGLMAMAY. At 236–298 the chain is on the cytoplasmic side; sequence FQIFRKLWGR…QMRARRKTAK (63 aa). A helical membrane pass occupies residues 299–321; that stretch reads MLMVVLLVFALCYLPISVLNVLK. Residues 322–336 lie on the Extracellular side of the membrane; that stretch reads RVFGMFRQASDREAV. Residues 337–360 form a helical membrane-spanning segment; sequence YACFTFSHWLVYANSAANPIIYNF. Over 361–425 the chain is Cytoplasmic; the sequence is LSGKFREQFK…LLTSVTTVLP (65 aa).

It belongs to the G-protein coupled receptor 1 family.

Its subcellular location is the cell membrane. Functionally, moderately selective excitatory receptor for orexin-A and, with a lower affinity, for orexin-B neuropeptide. Triggers an increase in cytoplasmic Ca(2+) levels in response to orexin-A binding. The chain is Orexin/Hypocretin receptor type 1 from Bos taurus (Bovine).